Reading from the N-terminus, the 1318-residue chain is DNA-directed RNA polymerase subunit beta' (1318 aa).

Zn(2+)-binding residues include Cys-60, Cys-62, Cys-75, and Cys-78. Mg(2+) is bound by residues Asp-535, Asp-537, and Asp-539. Residues Cys-890, Cys-967, Cys-974, and Cys-977 each contribute to the Zn(2+) site.

The protein belongs to the RNA polymerase beta' chain family. The RNAP catalytic core consists of 2 alpha, 1 beta, 1 beta' and 1 omega subunit. When a sigma factor is associated with the core the holoenzyme is formed, which can initiate transcription. Requires Mg(2+) as cofactor. Zn(2+) is required as a cofactor.

It carries out the reaction RNA(n) + a ribonucleoside 5'-triphosphate = RNA(n+1) + diphosphate. Functionally, DNA-dependent RNA polymerase catalyzes the transcription of DNA into RNA using the four ribonucleoside triphosphates as substrates. The chain is DNA-directed RNA polymerase subunit beta' from Rhodococcus erythropolis (strain PR4 / NBRC 100887).